Here is a 127-residue protein sequence, read N- to C-terminus: Probable toxin y4kH (127 aa).

This sequence belongs to the MbcT/ParT/Res family.

Its function is as follows. Probable toxic component of a type II toxin-antitoxin (TA) system. It is not known which gene encodes its antitoxin. The protein is Probable toxin y4kH of Sinorhizobium fredii (strain NBRC 101917 / NGR234).